Here is a 342-residue protein sequence, read N- to C-terminus: Anthranilate phosphoribosyltransferase (342 aa).

5-phospho-alpha-D-ribose 1-diphosphate is bound by residues G79, 82–83 (GD), T87, 89–92 (NIST), 107–115 (KHCNQRISS), and S119. G79 is a binding site for anthranilate. S91 lines the Mg(2+) pocket. N110 lines the anthranilate pocket. Residue R165 participates in anthranilate binding. Mg(2+) contacts are provided by D223 and E224.

The protein belongs to the anthranilate phosphoribosyltransferase family. In terms of assembly, homodimer. It depends on Mg(2+) as a cofactor.

It catalyses the reaction N-(5-phospho-beta-D-ribosyl)anthranilate + diphosphate = 5-phospho-alpha-D-ribose 1-diphosphate + anthranilate. It participates in amino-acid biosynthesis; L-tryptophan biosynthesis; L-tryptophan from chorismate: step 2/5. In terms of biological role, catalyzes the transfer of the phosphoribosyl group of 5-phosphorylribose-1-pyrophosphate (PRPP) to anthranilate to yield N-(5'-phosphoribosyl)-anthranilate (PRA). In Buchnera aphidicola subsp. Acyrthosiphon pisum (strain Tuc7), this protein is Anthranilate phosphoribosyltransferase.